Consider the following 180-residue polypeptide: Bifunctional protein PyrR (180 aa).

The PRPP-binding motif lies at 99–111 (VILVDDVLYTCRT).

It belongs to the purine/pyrimidine phosphoribosyltransferase family. PyrR subfamily. In terms of assembly, homodimer and homohexamer; in equilibrium.

The enzyme catalyses UMP + diphosphate = 5-phospho-alpha-D-ribose 1-diphosphate + uracil. In terms of biological role, regulates transcriptional attenuation of the pyrimidine nucleotide (pyr) operon by binding in a uridine-dependent manner to specific sites on pyr mRNA. This disrupts an antiterminator hairpin in the RNA and favors formation of a downstream transcription terminator, leading to a reduced expression of downstream genes. Also displays a weak uracil phosphoribosyltransferase activity which is not physiologically significant. The chain is Bifunctional protein PyrR from Clostridium botulinum (strain Eklund 17B / Type B).